We begin with the raw amino-acid sequence, 87 residues long: Phosphocarrier protein HPr (87 aa).

The HPr domain maps to M1–A87. The active-site Pros-phosphohistidine intermediate is the H15. At S46 the chain carries Phosphoserine; by HPrK/P.

The protein belongs to the HPr family.

The protein resides in the cytoplasm. Its activity is regulated as follows. Phosphorylation on Ser-46 inhibits the phosphoryl transfer from enzyme I to HPr. In terms of biological role, general (non sugar-specific) component of the phosphoenolpyruvate-dependent sugar phosphotransferase system (sugar PTS). This major carbohydrate active-transport system catalyzes the phosphorylation of incoming sugar substrates concomitantly with their translocation across the cell membrane. The phosphoryl group from phosphoenolpyruvate (PEP) is transferred to the phosphoryl carrier protein HPr by enzyme I. Phospho-HPr then transfers it to the PTS EIIA domain. Functionally, P-Ser-HPr interacts with the catabolite control protein A (CcpA), forming a complex that binds to DNA at the catabolite response elements cre, operator sites preceding a large number of catabolite-regulated genes. Thus, P-Ser-HPr is a corepressor in carbon catabolite repression (CCR), a mechanism that allows bacteria to coordinate and optimize the utilization of available carbon sources. P-Ser-HPr also plays a role in inducer exclusion, in which it probably interacts with several non-PTS permeases and inhibits their transport activity. This chain is Phosphocarrier protein HPr (ptsH), found in Streptococcus salivarius.